Reading from the N-terminus, the 363-residue chain is 1,2-Dihydrovomilenine reductase (363 aa).

Residues 24 to 352 enclose the Enoyl reductase (ER) domain; sequence GILSPFKFSR…KGDVRYRFVI (329 aa). Residue Cys51 coordinates Zn(2+). Position 53 (Ser53) interacts with NADP(+). Positions 54, 74, 104, 107, 110, and 118 each coordinate Zn(2+). Residues Leu193, Gly195, Leu196, Ser215, Thr216, Ser217, Lys220, Lys221, Val278, Ala280, Thr302, and Arg349 each coordinate NADP(+).

Belongs to the zinc-containing alcohol dehydrogenase family. Class-P subfamily. Homodimer. The cofactor is Zn(2+). Mainly expressed in mature roots and, to a lower extent, in stems and leaves.

Its subcellular location is the cytoplasm. It catalyses the reaction 17-O-acetylnorajmaline + NADP(+) = (2R)-1,2-dihydrovomilenine + NADPH + 2 H(+). It carries out the reaction (20S)-19,20-dihydrovomilenine + NADP(+) = vomilenine + NADPH + H(+). Its pathway is alkaloid biosynthesis; ajmaline biosynthesis. Its function is as follows. Alcohol dehydrogenase involved in the biosynthesis of ajmaline-type monoterpenoid indole alkaloids (MIAs) natural products, important plant-derived pharmaceuticals used in the therapy of heart disorders. Catalyzes the conversion of 1,2-dihydrovomilenine to 17-O-acetylnorajmaline, an intermediate chemical in the biosynthesis of ajmaline. Also able, with a lower efficiency, to convert vomilenine into 19,20-dihydrovomilenine. In Rauvolfia serpentina (Serpentine wood), this protein is 1,2-Dihydrovomilenine reductase.